The sequence spans 505 residues: uncharacterized protein (505 aa).

Residues 1 to 16 (MPPTASLTRSPPTASQ) are compositionally biased toward polar residues. The tract at residues 1 to 474 (MPPTASLTRS…TPPTASLTRT (474 aa)) is disordered. Low complexity-rich tracts occupy residues 17-33 (TRTLPRASRTRTPPRAS) and 40-59 (TASLRRTPSRASRTRTPPRA). Residues 66-78 (SRASLTRTLSRAS) are compositionally biased toward polar residues. Low complexity-rich tracts occupy residues 96-122 (SLTRTPPTASRTRSLPRASRTRTPPRT), 129-140 (PRTSQTRTPPRA), and 147-158 (SRASRTRTPPRA). Composition is skewed to polar residues over residues 165–177 (SRASLTRTPSRAS) and 188–200 (TRTPSRASLTRTP). The span at 201 to 226 (PTASLTRASRTRTPPRTSQTRTPPRA) shows a compositional bias: low complexity. 7 stretches are compositionally biased toward polar residues: residues 233-254 (SRASLTRTPSRASLTRTPSRAS), 265-293 (TRTPSRASLTRTPPTASLTRTPPTASLTR), 309-329 (LTRTPPTASLTRSPPTASLTR), 345-365 (LTRTPSTASLTRTPSRASLTR), 373-383 (TRTPSRASLTR), 399-408 (LTRSPPTASL), and 435-448 (LTRSPSTASLTRTP). Residues 453–474 (LRRTPPRTSLTRTPPTASLTRT) show a composition bias toward low complexity.

This is an uncharacterized protein from Homo sapiens (Human).